An 848-amino-acid polypeptide reads, in one-letter code: Adenylate cyclase (848 aa).

A catalytic region spans residues 1–535; sequence MYLYIETLKQ…DVSHHFPLRL (535 aa). A regulatory region spans residues 541-848; that stretch reads KALYSPCEIR…DTPLLQQYFS (308 aa). The residue at position 609 (His609) is a Phosphohistidine; by CRR.

Belongs to the adenylyl cyclase class-1 family.

Its subcellular location is the cytoplasm. It carries out the reaction ATP = 3',5'-cyclic AMP + diphosphate. With respect to regulation, the regulatory domain is involved in the regulation of cyclase activity by the carbon source. Activated by the PTS system, glucose-specific IIA component (CRR). Catalyzes the formation of the second messenger cAMP from ATP. Its transcript is probably degraded by endoribonuclease LS (rnlA), decreasing cAMP levels and the negative regulator Crp-cAMP, which then induces its own transcription again. This Escherichia coli (strain K12) protein is Adenylate cyclase (cyaA).